The chain runs to 604 residues: Beta-(1--&gt;2)glucan export ATP-binding/permease protein NdvA (604 aa).

An ABC transmembrane type-1 domain is found at 21–311 (GWILAFANLL…VVSFINSVFM (291 aa)). The next 6 membrane-spanning stretches (helical) occupy residues 22 to 42 (WILAFANLLLAGAQFAEPVLF), 68 to 88 (LLGAWVAFGLFTILCSAAVAL), 146 to 166 (EHFAAILSLVVLLPLALYINW), 168 to 188 (LAILLFILCVVFTVLTTLVVH), 238 to 258 (LLALQMPVLSWWALVTVITRA), and 285 to 305 (IVMFVSFATLLIQKLEQVVSF). The 235-residue stretch at 345–579 (VEFKDVSFSY…QGHFAALARA (235 aa)) folds into the ABC transporter domain. Position 378 to 385 (378 to 385 (GATGAGKS)) interacts with ATP.

The protein belongs to the ABC transporter superfamily. Beta-(1--&gt;2)glucan exporter (TC 3.A.1.108.1) family. As to quaternary structure, homodimer.

The protein resides in the cell inner membrane. It carries out the reaction [(1-&gt;2)-beta-D-glucosyl](n)(in) + ATP + H2O = [(1-&gt;2)-beta-D-glucosyl](n)(out) + ADP + phosphate + H(+). In terms of biological role, involved in beta-(1--&gt;2)glucan export. Transmembrane domains (TMD) form a pore in the inner membrane and the ATP-binding domain (NBD) is responsible for energy generation. This chain is Beta-(1--&gt;2)glucan export ATP-binding/permease protein NdvA, found in Rhodopseudomonas palustris (strain BisB18).